A 543-amino-acid polypeptide reads, in one-letter code: Carotenoid 9,10(9',10')-cleavage dioxygenase 1 (543 aa).

Positions 224, 272, 338, and 528 each coordinate Fe cation.

It belongs to the carotenoid oxygenase family. In terms of assembly, homodimer. The cofactor is Fe(2+).

It carries out the reaction all-trans-zeaxanthin + 2 O2 = 4,9-dimethyldodeca-2,4,6,8,10-pentaenedial + 2 (3R)-hydroxy-beta-ionone. Cleaves a variety of carotenoids at the 9-10 and 9'-10' double bonds. Probably not involved in abscisic acid biosynthesis. The polypeptide is Carotenoid 9,10(9',10')-cleavage dioxygenase 1 (CCD1) (Phaseolus vulgaris (Kidney bean)).